Here is a 320-residue protein sequence, read N- to C-terminus: tRNA uridine(34) hydroxylase (320 aa).

The region spanning 123–217 (EDENTVILDA…YGKDPETKGL (95 aa)) is the Rhodanese domain. The active-site Cysteine persulfide intermediate is Cys177.

This sequence belongs to the TrhO family.

It carries out the reaction uridine(34) in tRNA + AH2 + O2 = 5-hydroxyuridine(34) in tRNA + A + H2O. In terms of biological role, catalyzes oxygen-dependent 5-hydroxyuridine (ho5U) modification at position 34 in tRNAs. This Staphylococcus epidermidis (strain ATCC 35984 / DSM 28319 / BCRC 17069 / CCUG 31568 / BM 3577 / RP62A) protein is tRNA uridine(34) hydroxylase.